The primary structure comprises 319 residues: Ribonucleoside-diphosphate reductase small chain (319 aa).

Residues 313–319 (FSLDVDF) are interaction with R1.

The protein belongs to the ribonucleoside diphosphate reductase small chain family. In terms of assembly, interacts with RNR1/OPG080 subunit. Can interact with host RNR1 supunit. Fe cation is required as a cofactor.

The catalysed reaction is a 2'-deoxyribonucleoside 5'-diphosphate + [thioredoxin]-disulfide + H2O = a ribonucleoside 5'-diphosphate + [thioredoxin]-dithiol. Its function is as follows. Ribonucleoside-diphosphate reductase holoenzyme provides the precursors necessary for viral DNA synthesis. Allows virus growth in non-dividing cells. Catalyzes the biosynthesis of deoxyribonucleotides from the corresponding ribonucleotides. The protein is Ribonucleoside-diphosphate reductase small chain (OPG048) of Cynomys gunnisoni (Gunnison's prairie dog).